Reading from the N-terminus, the 952-residue chain is UvrABC system protein A (952 aa).

An ATP-binding site is contributed by G38–S45. The C4-type zinc-finger motif lies at C258–C285. 2 ABC transporter domains span residues F315 to I596 and G616 to E945. Residue G648–S655 coordinates ATP. A C4-type zinc finger spans residues C747–C773.

It belongs to the ABC transporter superfamily. UvrA family. In terms of assembly, forms a heterotetramer with UvrB during the search for lesions.

It localises to the cytoplasm. The UvrABC repair system catalyzes the recognition and processing of DNA lesions. UvrA is an ATPase and a DNA-binding protein. A damage recognition complex composed of 2 UvrA and 2 UvrB subunits scans DNA for abnormalities. When the presence of a lesion has been verified by UvrB, the UvrA molecules dissociate. The polypeptide is UvrABC system protein A (Malacoplasma penetrans (strain HF-2) (Mycoplasma penetrans)).